Reading from the N-terminus, the 90-residue chain is Acylphosphatase (90 aa).

Residues 3–90 form the Acylphosphatase-like domain; that stretch reads QRQFTVYGCV…RVFSDFTIER (88 aa). Active-site residues include R18 and N36.

This sequence belongs to the acylphosphatase family.

The enzyme catalyses an acyl phosphate + H2O = a carboxylate + phosphate + H(+). This chain is Acylphosphatase (acyP), found in Actinobacillus succinogenes (strain ATCC 55618 / DSM 22257 / CCUG 43843 / 130Z).